A 155-amino-acid polypeptide reads, in one-letter code: Histone H3-like centromeric protein hH3v (155 aa).

A compositionally biased stretch (low complexity) spans 1–24; that stretch reads MPPKKGGVTKSKAVSKKAAAVPTP. The tract at residues 1–56 is disordered; that stretch reads MPPKKGGVTKSKAVSKKAAAVPTPKATPPGRRKSRASSVQPGDPVPQGKKRRYRPG. The tract at residues 45 to 148 is H3-like; that stretch reads VPQGKKRRYR…IQLARRIRGV (104 aa).

Belongs to the histone H3 family. In terms of assembly, component of centromeric nucleosomes, where DNA is wrapped around a histone octamer core. The octamer contains two molecules each of H2A, H2B, hH3v/CENPA and H4 assembled in one hH3v-H4 heterotetramer and two H2A-H2B heterodimers. Interacts with the inner kinetochore. In terms of processing, ubiquitinated. Is degraded through ubiquitin-mediated proteolysis when not protected by its association to the kinetochore.

It is found in the nucleus. The protein resides in the chromosome. The protein localises to the centromere. Its function is as follows. Histone H3-like nucleosomal protein that is specifically found in centromeric nucleosomes. Replaces conventional H3 in the nucleosome core of centromeric chromatin that serves as an assembly site for the inner kinetochore. Required for recruitment and assembly of kinetochore proteins, mitotic progression and chromosome segregation. May serve as an epigenetic mark that propagates centromere identity through replication and cell division. The chain is Histone H3-like centromeric protein hH3v (hH3v) from Neurospora crassa (strain ATCC 24698 / 74-OR23-1A / CBS 708.71 / DSM 1257 / FGSC 987).